Reading from the N-terminus, the 753-residue chain is MSQWYELQQLDSKFLEQVHQLYDDSFPMEIRQYLAQWLENQDWEHAANDVSFATIRFHDLLSQLDDQYSRFSLENNFLLQHNIRKSKRNLQDNFQEDPIQMSMIICNCLKEERKILENAQRFNQTQSGNIQSTVMLDKHKELDSKVRNVKDKVMCIEHEIKTLEDLQDEYDFKCKTLQNREHDTNGVAKNDQKQEQMLLQKMYLMLDNKRKEVVHKIIELLNVTELTQKALINDELVEWKRRQQSACIGGPPNACLDQLQNWFTIVAESLQQVRQQLKKLEELEQKYTYEHDPITKNKQALWDRTFSLFQQLIQSSFVVERQPCMPTHPQRPLVLKTGVQFTVKLRLLVKLQELNYNLKVKVLFDKDVSERNTVKGFRKFNILGTHTKVMNMEESTNGSLAAEFRHLQLKEQKNAGARTNEGPLIVTEELHSLSFETQLCQPGLVIDLETTSLPVVVISNVSQLPSGWASILWYNMLVAEPRNLSFFLNPPCARWSQLSEVLSWQFSSVTKRGLNVDQLNMLGEKLLGPTAGPDGLIPWTRFCKENINDKNFPFWLWIESILELIKKHLLSLWNDGCIVGFISKERERALLKDQQPGTFLLRFSESCREGAITFTWVERSQNGGEPYFHAVEPYTKKELSAVTFPDIIRNYKVMAAENIPENPLKYLYPNIDKDHAFGKYYSRPKEAPEPMELDGPKGTGYIKTELISVSEVHPSRLQTTDNLLPMSPEEFDEVSRMVGPVEFDMVSMTRGRS.

An N-acetylserine modification is found at S2. N6-methyllysine occurs at positions 114, 175, 296, 366, 525, and 637. The stretch at 136–317 forms a coiled coil; it reads LDKHKELDSK…LFQQLIQSSF (182 aa). The 98-residue stretch at 573–670 folds into the SH2 domain; it reads WNDGCIVGFI…ENPLKYLYPN (98 aa). E657 is modified (ADP-ribosyl glutamic acid). An N6-methyllysine modification is found at K665. At Y701 the chain carries Phosphotyrosine; by JAK1, JAK2 or TYK2. K703 is covalently cross-linked (Glycyl lysine isopeptide (Lys-Gly) (interchain with G-Cter in SUMO1); alternate). K703 participates in a covalent cross-link: Glycyl lysine isopeptide (Lys-Gly) (interchain with G-Cter in SUMO2); alternate. E705 is modified (ADP-ribosyl glutamic acid). S708 carries the phosphoserine; by IKKE modification. S727 is modified (phosphoserine; by MAPK14). A Phosphothreonine modification is found at T749.

Belongs to the transcription factor STAT family. As to quaternary structure, homodimerizes upon IFN-gamma induced phosphorylation. Heterodimer with STAT2 upon IFN-alpha/beta induced phosphorylation. The heterodimer STAT1:STAT2 forms the interferon-stimulated gene factor 3 complex (ISGF3) with IRF9. Interacts (phosphorylated at Ser-727) with PIAS1; the interaction results in release of STAT1 from its target gene. Interacts with IFNAR1. Interacts with IFNAR2. Found in a complex with NMI and CREBBP/CBP. Interacts with NMI which is required for CREBBP/CBP recruitment to the complex. Interacts with PTK2/FAK1. Interacts with SRC. Interacts with ERBB4 (phosphorylated). Interacts with PARP9 and DTX3L independently of IFN-beta or IFN-gamma-mediated STAT1 'Tyr-701' phosphorylation. Interacts with histone acetyltransferase EP300/p300 in response to INF-gamma stimulation. Independently of its phosphorylation status, interacts with OTOP1. Interacts with IFNGR1. Interacts with STAT4. (Microbial infection) Interacts with African swine fever virus (ASFV) MGF360-9L; this interaction mediates degradation of STAT1 through apoptosis. Post-translationally, phosphorylated on tyrosine and serine residues in response to a variety of cytokines/growth hormones including IFN-alpha, IFN-gamma, PDGF and EGF. Activated KIT promotes phosphorylation on tyrosine residues and subsequent translocation to the nucleus. Upon EGF stimulation, phosphorylation on Tyr-701 (lacking in beta form) by JAK1, JAK2 or TYK2 promotes dimerization and subsequent translocation to the nucleus. Growth hormone (GH) activates STAT1 signaling only via JAK2. Tyrosine phosphorylated in response to constitutively activated FGFR1, FGFR2, FGFR3 and FGFR4. Phosphorylation on Ser-727 by several kinases including MAPK14, ERK1/2 and CAMK2/CAMKII in response to IFN-gamma stimulation, is required for maximal transcriptional activity. Phosphorylated on Ser-727 by CAMK2/CAMKII in response to IFN-gamma stimulation and calcium mobilization, promoting activity. Phosphorylated by CAMK2/CAMKII in response to IFN-beta stimulation and calcium mobilization in epithelial cells, promoting activity. Phosphorylation on Ser-727 promotes sumoylation though increasing interaction with PIAS. Phosphorylation on Ser-727 by PRKCD induces apoptosis in response to DNA-damaging agents. Phosphorylated on tyrosine residues when PTK2/FAK1 is activated; most likely this is catalyzed by a SRC family kinase. Dephosphorylation on tyrosine residues by PTPN2 negatively regulates interferon-mediated signaling. Upon viral infection or IFN induction, phosphorylation on Ser-708 occurs much later than phosphorylation on Tyr-701 and is required for the binding of ISGF3 on the ISREs of a subset of IFN-stimulated genes IKBKE-dependent. Phosphorylation at Tyr-701 and Ser-708 are mutually exclusive, phosphorylation at Ser-708 requires previous dephosphorylation of Tyr-701. Phosphorylation at Thr-749 by IKBKB/IKKB promotes transcriptional activation of ARID5A and IL12B by STAT1. Phosphorylation at Thr-749 restricts interferon signaling and anti-inflammatory responses and promotes innate inflammatory responses. Sumoylated with SUMO1, SUMO2 and SUMO3. Sumoylation is enhanced by IFN-gamma-induced phosphorylation on Ser-727, and by interaction with PIAS proteins. Enhances the transactivation activity. In terms of processing, ISGylated. Post-translationally, mono-ADP-ribosylated at Glu-657 and Glu-705 by PARP14; ADP-ribosylation prevents phosphorylation at Tyr-701. However, the role of ADP-ribosylation in the prevention of phosphorylation has been called into question and the lack of phosphorylation may be due to sumoylation of Lys-703. Monomethylated at Lys-525 by SETD2; monomethylation is necessary for phosphorylation at Tyr-701, translocation into the nucleus and activation of the antiviral defense. In terms of processing, deubiquitinated by USP13; leading to STAT1 stabilization and positive regulation of type I and type II IFN signalings.

The protein resides in the cytoplasm. It localises to the nucleus. Signal transducer and transcription activator that mediates cellular responses to interferons (IFNs), cytokine KITLG/SCF and other cytokines and other growth factors. Following type I IFN (IFN-alpha and IFN-beta) binding to cell surface receptors, signaling via protein kinases leads to activation of Jak kinases (TYK2 and JAK1) and to tyrosine phosphorylation of STAT1 and STAT2. The phosphorylated STATs dimerize and associate with ISGF3G/IRF-9 to form a complex termed ISGF3 transcription factor, that enters the nucleus. ISGF3 binds to the IFN stimulated response element (ISRE) to activate the transcription of IFN-stimulated genes (ISG), which drive the cell in an antiviral state. In response to type II IFN (IFN-gamma), STAT1 is tyrosine- and serine-phosphorylated. It then forms a homodimer termed IFN-gamma-activated factor (GAF), migrates into the nucleus and binds to the IFN gamma activated sequence (GAS) to drive the expression of the target genes, inducing a cellular antiviral state. Becomes activated in response to KITLG/SCF and KIT signaling. May mediate cellular responses to activated FGFR1, FGFR2, FGFR3 and FGFR4. Following bacterial lipopolysaccharide (LPS)-induced TLR4 endocytosis, phosphorylated at Thr-749 by IKBKB which promotes binding of STAT1 to the 5'-TTTGAGGC-3' sequence in the ARID5A promoter, resulting in transcriptional activation of ARID5A and subsequent ARID5A-mediated stabilization of IL6. Phosphorylation at Thr-749 also promotes binding of STAT1 to the 5'-TTTGAGTC-3' sequence in the IL12B promoter and activation of IL12B transcription. Involved in food tolerance in small intestine: associates with the Gasdermin-D, p13 cleavage product (13 kDa GSDMD) and promotes transcription of CIITA, inducing type 1 regulatory T (Tr1) cells in upper small intestine. The polypeptide is Signal transducer and activator of transcription 1 (STAT1) (Sus scrofa (Pig)).